Here is an 850-residue protein sequence, read N- to C-terminus: MLADVLRLGEARTVKQLSAIADHVDSLARGVENLTDAELSSRTDVFRRRVADGDVLDELLPEGFAVAREAAWRVLGLRPYHVQVMGGAALHFGNIAEMMTGEGKTLACVMPAYLNAIGGKGVHIVTVNDYLAGRDAEQMGRVHRFLGLTVGVILSEMKPDERRAAYAADITYGTNNEFGFDYLRDNMAGRLEDRVQRGHCYAIVDEVDSILIDEARTPMIISGPADDATRWYAEFARLAALMTRDVHYEVDTRRRTIGVSEAGVALVEDQLGVDNLYQVVHAPLVGHLNNAVRAKELFHRDREYIVNDDGEVLIVDEFTGRVLVGRRYNEGLHQAIEAKEGVEVKPENQTLATITLQNYFRLYDRLAGMTGTARSEASEFRDIYRLGVITIPPNRPVVRRDEVDVVYKTESAKFDAVVEDVVGRHAAGQPVLIGTTSVEKSEYLSGRLTERRVPHTVLNAKHLEQEAAIVAEGGRRGAVTVATDMAGRGTDIMLGGNVDFLTDKRLRSRGLHPTRSPEEYDAAWAEVRREVAAESRTEAREVVALGGLYVLGTERHESRRIDNQLRGRSGRQGDPGETRFYVSLCDELMRRSATFDLEKLMSRLKMPEREPIEAKVVSRAIRNAQSQVEQANFDMRRSVVKYGQVLDQQRRIVYQARSRLLEGEDMQHQIFHMIGDVVTAYVNECTAGRRTADWDLETLRAALSTLYPVVWQPDPRPHMRGLTRSVLRHEVIADARRALVRRKAAIEARSGLRVMRELERAILLDCLDSKWRAHLYEMDYLAAGIGMRALAGADPVVEYHREGHRMFVRMLEAVKEQSIRSLFDATTRMLAPIMPSAARSPGTPDPRWPF.

Residues Q83, G101–T105, and D491 contribute to the ATP site.

This sequence belongs to the SecA family. Monomer and homodimer. Part of the essential Sec protein translocation apparatus which comprises SecA, SecYEG and auxiliary proteins SecDF. Other proteins may also be involved.

It localises to the cell membrane. The protein localises to the cytoplasm. The catalysed reaction is ATP + H2O + cellular proteinSide 1 = ADP + phosphate + cellular proteinSide 2.. Functionally, part of the Sec protein translocase complex. Interacts with the SecYEG preprotein conducting channel. Has a central role in coupling the hydrolysis of ATP to the transfer of proteins into and across the cell membrane, serving as an ATP-driven molecular motor driving the stepwise translocation of polypeptide chains across the membrane. This Mycolicibacterium vanbaalenii (strain DSM 7251 / JCM 13017 / BCRC 16820 / KCTC 9966 / NRRL B-24157 / PYR-1) (Mycobacterium vanbaalenii) protein is Protein translocase subunit SecA 2.